The primary structure comprises 175 residues: Bifunctional protein PyrR (175 aa).

Residues 40–41 (TR), 102–110 (DDVLYTGRT), Arg-135, and Val-159 each bind substrate. The PRPP-binding motif lies at 98–110 (VIIIDDVLYTGRT).

The protein belongs to the purine/pyrimidine phosphoribosyltransferase family. PyrR subfamily. In terms of assembly, homodimer and homohexamer; in equilibrium.

The catalysed reaction is UMP + diphosphate = 5-phospho-alpha-D-ribose 1-diphosphate + uracil. Functionally, regulates transcriptional attenuation of the pyrimidine nucleotide (pyr) operon by binding in a uridine-dependent manner to specific sites on pyr mRNA. This disrupts an antiterminator hairpin in the RNA and favors formation of a downstream transcription terminator, leading to a reduced expression of downstream genes. In terms of biological role, also displays a weak uracil phosphoribosyltransferase activity which is not physiologically significant. The polypeptide is Bifunctional protein PyrR (Staphylococcus haemolyticus (strain JCSC1435)).